The primary structure comprises 138 residues: Holo-[acyl-carrier-protein] synthase (138 aa).

Residues Asp-8 and Glu-54 each contribute to the Mg(2+) site.

Belongs to the P-Pant transferase superfamily. AcpS family. Mg(2+) is required as a cofactor.

It localises to the cytoplasm. It catalyses the reaction apo-[ACP] + CoA = holo-[ACP] + adenosine 3',5'-bisphosphate + H(+). In terms of biological role, transfers the 4'-phosphopantetheine moiety from coenzyme A to a Ser of acyl-carrier-protein. The sequence is that of Holo-[acyl-carrier-protein] synthase from Roseiflexus sp. (strain RS-1).